We begin with the raw amino-acid sequence, 1426 residues long: A disintegrin and metalloproteinase with thrombospondin motifs 13 (1426 aa).

A signal peptide spans 1–33 (MSQLCLWLTCQPCYAVSVRGILTGAIFILGCWG). The propeptide occupies 34 to 76 (LSDFQKSLLQDLEPKDVSSYFGHHAAPFTGHPPSHLQRLRRRR). The Peptidase M12B domain occupies 74 to 291 (RRRTLEDILH…GQMHCFQDPP (218 aa)). Glu-85 is a binding site for Ca(2+). Residues Asn-144 and Asn-148 are each glycosylated (N-linked (GlcNAc...) asparagine). Intrachain disulfides connect Cys-157-Cys-210, Cys-204-Cys-286, and Cys-246-Cys-270. Residues Asp-175, Asp-184, Glu-186, Asp-189, and Glu-214 each contribute to the Ca(2+) site. Position 226 (His-226) interacts with Zn(2+). The active site involves Glu-227. The Zn(2+) site is built by His-230 and His-236. Thr-281 and Asp-289 together coordinate Ca(2+). Positions 295-388 (SGLTRHQLMA…LAELAPVAAV (94 aa)) constitute a Disintegrin domain. Cystine bridges form between Cys-316-Cys-342, Cys-327-Cys-352, Cys-337-Cys-371, Cys-365-Cys-376, Cys-401-Cys-438, Cys-405-Cys-443, Cys-416-Cys-428, Cys-488-Cys-527, Cys-513-Cys-532, Cys-537-Cys-553, and Cys-550-Cys-560. Positions 389–444 (HGHWSSWGPHSPCSRSCGGGVITRRRWCNNPRPAFGGRACVGEDLQAKMCNTQACE) constitute a TSP type-1 1 domain. A cysteine-rich region spans residues 445-561 (KTQLEFMSEQ…VCGGDNSTCS (117 aa)). Residues 503–505 (RGD) carry the Cell attachment site motif. The interval 556–685 (DNSTCSSRNG…PDITFSYFQL (130 aa)) is spacer. Asn-557, Asn-564, Asn-584, and Asn-619 each carry an N-linked (GlcNAc...) asparagine glycan. TSP type-1 domains are found at residues 687 to 746 (QQAA…VSAP), 747 to 810 (CSPY…QPCP), 808 to 871 (PCPT…SLCS), 904 to 957 (WTPL…RARP), 958 to 1019 (CPAR…EPCP), 1020 to 1078 (ARWK…IADC), and 1079 to 1137 (AFRW…GPCA). 2 O-linked (Fuc...) serine glycosylation sites follow: Ser-703 and Ser-762. Asn-834 carries an N-linked (GlcNAc...) asparagine glycan. Ser-914 carries an O-linked (Fuc...) serine glycan. Thr-973 carries O-linked (Fuc...) threonine glycosylation. Ser-1033 carries O-linked (Fuc...) serine glycosylation. Asn-1057 is a glycosylation site (N-linked (GlcNAc...) asparagine). Ser-1093 carries O-linked (Fuc...) serine glycosylation. 2 consecutive CUB domains span residues 1195 to 1302 (ACGR…FYKE) and 1293 to 1426 (QPAP…LALS).

Requires Zn(2+) as cofactor. It depends on Ca(2+) as a cofactor. Post-translationally, the precursor is processed by a furin endopeptidase which cleaves off the pro-domain. In terms of processing, O-glycosylated. O-fucosylated by POFUT2 on a serine or a threonine residue found within the consensus sequence C1-X(2)-(S/T)-C2-G of the TSP type-1 repeat domains where C1 and C2 are the first and second cysteine residue of the repeat, respectively. Fucosylated repeats can then be further glycosylated by the addition of a beta-1,3-glucose residue by the glucosyltransferase, B3GALTL. Fucosylation mediates the efficient secretion of ADAMTS13. May also be C-glycosylated on tryptophan residues within the consensus sequence W-X-X-W of the TPRs, and also N-glycosylated. These other glycosylations can also facilitate secretion. In terms of tissue distribution, plasma. Expression is consistently high in liver, medium in lung and spleen, low in skeletal muscle and undetectable in heart, brain, kidney and testis.

The protein resides in the secreted. The catalysed reaction is The enzyme cleaves the von Willebrand factor at bond 842-Tyr-|-Met-843 within the A2 domain.. Zinc and calcium ions cooperatively modulate enzyme activity. The cleavage of the pro-domain is not required for protease activity. Dependence on calcium for proteolytic activity is mediated by the high affinity site. Functionally, cleaves the vWF multimers in plasma into smaller forms thereby controlling vWF-mediated platelet thrombus formation. In Mus musculus (Mouse), this protein is A disintegrin and metalloproteinase with thrombospondin motifs 13 (Adamts13).